Reading from the N-terminus, the 272-residue chain is tRNA pseudouridine synthase B (272 aa).

The Nucleophile role is filled by aspartate 38.

This sequence belongs to the pseudouridine synthase TruB family. Type 1 subfamily.

It carries out the reaction uridine(55) in tRNA = pseudouridine(55) in tRNA. Functionally, responsible for synthesis of pseudouridine from uracil-55 in the psi GC loop of transfer RNAs. The chain is tRNA pseudouridine synthase B from Campylobacter jejuni subsp. jejuni serotype O:23/36 (strain 81-176).